The primary structure comprises 590 residues: Arginine--tRNA ligase (590 aa).

The 'HIGH' region motif lies at 138–148 (ANPTGPLHIGH).

This sequence belongs to the class-I aminoacyl-tRNA synthetase family. As to quaternary structure, monomer.

It is found in the cytoplasm. The catalysed reaction is tRNA(Arg) + L-arginine + ATP = L-arginyl-tRNA(Arg) + AMP + diphosphate. The protein is Arginine--tRNA ligase of Orientia tsutsugamushi (strain Boryong) (Rickettsia tsutsugamushi).